Reading from the N-terminus, the 145-residue chain is Photosystem I reaction center subunit VI-1, chloroplastic (145 aa).

The transit peptide at Met-1–Ala-50 directs the protein to the chloroplast. Residues Leu-102–Val-118 traverse the membrane as a helical segment.

The protein belongs to the psaH family.

It is found in the plastid. It localises to the chloroplast thylakoid membrane. Possible role could be the docking of the LHC I antenna complex to the core complex. In Arabidopsis thaliana (Mouse-ear cress), this protein is Photosystem I reaction center subunit VI-1, chloroplastic (PSAH1).